A 632-amino-acid polypeptide reads, in one-letter code: 1-deoxy-D-xylulose-5-phosphate synthase (632 aa).

Residues histidine 72 and 113 to 115 each bind thiamine diphosphate; that span reads GHA. Residue aspartate 144 coordinates Mg(2+). Thiamine diphosphate-binding positions include 145–146, asparagine 174, tyrosine 285, and glutamate 368; that span reads GA. A Mg(2+)-binding site is contributed by asparagine 174.

It belongs to the transketolase family. DXPS subfamily. In terms of assembly, homodimer. The cofactor is Mg(2+). It depends on thiamine diphosphate as a cofactor.

It carries out the reaction D-glyceraldehyde 3-phosphate + pyruvate + H(+) = 1-deoxy-D-xylulose 5-phosphate + CO2. It participates in metabolic intermediate biosynthesis; 1-deoxy-D-xylulose 5-phosphate biosynthesis; 1-deoxy-D-xylulose 5-phosphate from D-glyceraldehyde 3-phosphate and pyruvate: step 1/1. Functionally, catalyzes the acyloin condensation reaction between C atoms 2 and 3 of pyruvate and glyceraldehyde 3-phosphate to yield 1-deoxy-D-xylulose-5-phosphate (DXP). The sequence is that of 1-deoxy-D-xylulose-5-phosphate synthase from Cyanothece sp. (strain PCC 7425 / ATCC 29141).